A 140-amino-acid chain; its full sequence is Transcription antitermination protein NusB (140 aa).

Belongs to the NusB family.

In terms of biological role, involved in transcription antitermination. Required for transcription of ribosomal RNA (rRNA) genes. Binds specifically to the boxA antiterminator sequence of the ribosomal RNA (rrn) operons. The polypeptide is Transcription antitermination protein NusB (Myxococcus xanthus (strain DK1622)).